The chain runs to 597 residues: Probable translation initiation factor IF-2 (597 aa).

One can recognise a tr-type G domain in the interval 13–229; it reads LRTPIVCVMG…LLGLAQKFLE (217 aa). The G1 stretch occupies residues 22–29; it reads GHVDHGKT. A GTP-binding site is contributed by 22-29; sequence GHVDHGKT. Positions 47-51 are G2; sequence AITQH. Residues 84-87 are G3; the sequence is DTPG. GTP is bound by residues 84–88 and 138–141; these read DTPGH and NKID. Positions 138–141 are G4; sequence NKID. Residues 206–208 form a G5 region; sequence SAV.

The protein belongs to the TRAFAC class translation factor GTPase superfamily. Classic translation factor GTPase family. IF-2 subfamily.

Its function is as follows. Function in general translation initiation by promoting the binding of the formylmethionine-tRNA to ribosomes. Seems to function along with eIF-2. This is Probable translation initiation factor IF-2 from Methanosarcina acetivorans (strain ATCC 35395 / DSM 2834 / JCM 12185 / C2A).